The sequence spans 176 residues: Disulfide bond formation protein B (176 aa).

Residues 1–11 (MLQLTTYRNLQ) are Cytoplasmic-facing. The helical transmembrane segment at 12–28 (VFLVIMTAIGMSFALFF) threads the bilayer. The Periplasmic segment spans residues 29–46 (LQRYMGFSPCPLCIFQRI). C38 and C41 are joined by a disulfide. Residues 47 to 63 (GLMIMGGFALIAALFHP) form a helical membrane-spanning segment. Residues 64-70 (KSMVIRL) are Cytoplasmic-facing. The helical transmembrane segment at 71–88 (LLWLGSLAGIGWAAIVAG) threads the bilayer. Over 89-145 (RHVWLQHLPADQVPSCGPGLDYWLDTLPMQQVLKEVFAGSGECASIEWTFLGLSIPE) the chain is Periplasmic. C104 and C131 form a disulfide bridge. Residues 146–164 (QSLILFSILILTHLLILWR) form a helical membrane-spanning segment. At 165–176 (IVRPSTPKPLAR) the chain is on the cytoplasmic side.

Belongs to the DsbB family.

It localises to the cell inner membrane. Required for disulfide bond formation in some periplasmic proteins. Acts by oxidizing the DsbA protein. The chain is Disulfide bond formation protein B from Psychrobacter arcticus (strain DSM 17307 / VKM B-2377 / 273-4).